We begin with the raw amino-acid sequence, 393 residues long: Metal tolerance protein A2 (393 aa).

Residues 1 to 72 (MVTPKLHLDL…EAQERAASMR (72 aa)) lie on the Cytoplasmic side of the membrane. Residues 73–93 (KLLIAVLLCAIFIVVEVVGGI) form a helical membrane-spanning segment. Topologically, residues 94–105 (KANSLAILTDAA) are vacuolar. A helical membrane pass occupies residues 106–126 (HLLSDVAAFAISLFSLWASGW). Topologically, residues 127-138 (KANPQQSYGFFR) are cytoplasmic. The helical transmembrane segment at 139-159 (IEILGALVSIQMIWLLAGILV) threads the bilayer. At 160–176 (YEAIVRLNNGSGEVEGS) the chain is on the vacuolar side. A helical transmembrane segment spans residues 177 to 197 (LMFAVSAVGLLVNIAMAILLG). The interval 198–233 (HDHGHGHGHSHDNGHGHSHDHGHGIAATEHHHDSGH) is required for zinc-binding. Residues 198–257 (HDHGHGHGHSHDNGHGHSHDHGHGIAATEHHHDSGHDESQLSDVLIEQKKQRNVNIQGAY) are Cytoplasmic-facing. Basic and acidic residues predominate over residues 202–236 (HGHGHSHDNGHGHSHDHGHGIAATEHHHDSGHDES). Residues 202–237 (HGHGHSHDNGHGHSHDHGHGIAATEHHHDSGHDESQ) form a disordered region. Residues 258–278 (LHVLGDSIQSVGVMIGGAIIW) form a helical membrane-spanning segment. The Vacuolar segment spans residues 279–284 (YKPEWK). The chain crosses the membrane as a helical span at residues 285–305 (ILDLICTLVFSVIVLGTTIGM). The Cytoplasmic segment spans residues 306-393 (LRNILEVLME…SHVTIQIERQ (88 aa)).

This sequence belongs to the cation diffusion facilitator (CDF) transporter (TC 2.A.4) family. SLC30A subfamily.

The protein localises to the membrane. Involved in sequestration of excess zinc in the cytoplasm into vacuoles to maintain zinc homeostasis. The protein is Metal tolerance protein A2 (MTPA2) of Arabidopsis thaliana (Mouse-ear cress).